Reading from the N-terminus, the 357-residue chain is Protein RecA (357 aa).

Gly73 to Thr80 lines the ATP pocket.

It belongs to the RecA family.

Its subcellular location is the cytoplasm. Can catalyze the hydrolysis of ATP in the presence of single-stranded DNA, the ATP-dependent uptake of single-stranded DNA by duplex DNA, and the ATP-dependent hybridization of homologous single-stranded DNAs. It interacts with LexA causing its activation and leading to its autocatalytic cleavage. This is Protein RecA from Nitratidesulfovibrio vulgaris (strain ATCC 29579 / DSM 644 / CCUG 34227 / NCIMB 8303 / VKM B-1760 / Hildenborough) (Desulfovibrio vulgaris).